The sequence spans 123 residues: Ribonuclease P protein component 2 (123 aa).

The protein belongs to the eukaryotic/archaeal RNase P protein component 2 family. In terms of assembly, consists of a catalytic RNA component and at least 4-5 protein subunits.

It localises to the cytoplasm. It carries out the reaction Endonucleolytic cleavage of RNA, removing 5'-extranucleotides from tRNA precursor.. Part of ribonuclease P, a protein complex that generates mature tRNA molecules by cleaving their 5'-ends. The protein is Ribonuclease P protein component 2 of Sulfurisphaera tokodaii (strain DSM 16993 / JCM 10545 / NBRC 100140 / 7) (Sulfolobus tokodaii).